We begin with the raw amino-acid sequence, 157 residues long: Endoribonuclease YbeY (157 aa).

H111, H115, and H121 together coordinate Zn(2+).

This sequence belongs to the endoribonuclease YbeY family. Requires Zn(2+) as cofactor.

The protein resides in the cytoplasm. Functionally, single strand-specific metallo-endoribonuclease involved in late-stage 70S ribosome quality control and in maturation of the 3' terminus of the 16S rRNA. The chain is Endoribonuclease YbeY from Pseudomonas entomophila (strain L48).